A 452-amino-acid polypeptide reads, in one-letter code: Chaperone SurA (452 aa).

Residues 1–28 (MKKTLRFAAVVSSLAAASALLAAAPAAA) form the signal peptide. PpiC domains follow at residues 186-288 (QQDL…RLVD) and 302-400 (IVQT…QVLS).

Its subcellular location is the periplasm. The enzyme catalyses [protein]-peptidylproline (omega=180) = [protein]-peptidylproline (omega=0). Functionally, chaperone involved in the correct folding and assembly of outer membrane proteins. Recognizes specific patterns of aromatic residues and the orientation of their side chains, which are found more frequently in integral outer membrane proteins. May act in both early periplasmic and late outer membrane-associated steps of protein maturation. This Burkholderia lata (strain ATCC 17760 / DSM 23089 / LMG 22485 / NCIMB 9086 / R18194 / 383) protein is Chaperone SurA.